The chain runs to 301 residues: MSDLGSEELEEEGENDLGEYEGERNEVGERHGHGKARLPNGDTYEGSYEFGKRHGQGTYKFKNGARYTGDYVKNKKHGQGTFIYPDGSRYEGEWADDQRHGQGVYYYVNNDTYTGEWFNHQRHGQGTYLYAETGSKYVGTWVHGQQEGAAELIHLNHRYQGKFMNKNPVGPGKYVFDIGCEQHGEYRLTDTERGEEEEEEETLVNIVPKWKALNITELALWTPTLSEEQPPPEGQGQEEPQGLTGVGDPSEDIQAEGFEGELEPRGADEDVDTFRQESQENSYDIDQGNLNFDEEPSDLQD.

Residues 1–20 (MSDLGSEELEEEGENDLGEY) are compositionally biased toward acidic residues. The tract at residues 1-41 (MSDLGSEELEEEGENDLGEYEGERNEVGERHGHGKARLPNG) is disordered. MORN repeat units follow at residues 20–43 (YEGERNEVGERHGHGKARLPNGDT), 44–66 (YEGSYEFGKRHGQGTYKFKNGAR), 67–89 (YTGDYVKNKKHGQGTFIYPDGSR), 90–112 (YEGEWADDQRHGQGVYYYVNNDT), 113–135 (YTGEWFNHQRHGQGTYLYAETGS), and 159–181 (YQGKFMNKNPVGPGKYVFDIGCE). A compositionally biased stretch (basic and acidic residues) spans 21 to 31 (EGERNEVGERH). The tract at residues 225 to 301 (LSEEQPPPEG…FDEEPSDLQD (77 aa)) is disordered. Acidic residues predominate over residues 249–261 (PSEDIQAEGFEGE). Over residues 262-278 (LEPRGADEDVDTFRQES) the composition is skewed to basic and acidic residues. Over residues 279–290 (QENSYDIDQGNL) the composition is skewed to polar residues. Over residues 292 to 301 (FDEEPSDLQD) the composition is skewed to acidic residues.

In terms of assembly, component of the axonemal radial spoke 1 (RS1) and 2 (RS2) complexes, at least composed of spoke head proteins RSPH1, RSPH3, RSPH9 and the cilia-specific component RSPH4A or sperm-specific component RSPH6A, spoke stalk proteins RSPH14, DNAJB13, DYDC1, ROPN1L and NME5, and the RS1 complex-specific anchor protein IQUB. Interacts with RSPH3B. Interacts with RSPH4A. Interacts with RSPH6A. In terms of tissue distribution, expressed in the trachea, ependymal cells, oviduct and ependymal cells (at protein level). Germ cell specific. Specifically expressed in testis, and to a lower extent in ovary. Not expressed in somatic tissues.

Its subcellular location is the cytoplasm. It is found in the chromosome. The protein resides in the cytoskeleton. It localises to the cilium axoneme. The protein localises to the flagellum axoneme. Its function is as follows. Functions as part of axonemal radial spoke complexes that play an important part in the motility of sperm and cilia. In Mus musculus (Mouse), this protein is Radial spoke head 1 homolog (Rsph1).